A 460-amino-acid polypeptide reads, in one-letter code: Diguanylate cyclase DosC (460 aa).

Histidine 98 provides a ligand contact to heme. The GGDEF domain maps to 325–458 (TPLSVLIIDV…GRNRVELWKA (134 aa)). Residue aspartate 333 participates in Mg(2+) binding. Substrate-binding residues include asparagine 341 and aspartate 350. Residue aspartate 376 participates in Mg(2+) binding. Aspartate 376 (proton acceptor) is an active-site residue.

It depends on heme as a cofactor. The cofactor is Mg(2+).

The catalysed reaction is 2 GTP = 3',3'-c-di-GMP + 2 diphosphate. It participates in purine metabolism; 3',5'-cyclic di-GMP biosynthesis. Globin-coupled heme-based oxygen sensor protein displaying diguanylate cyclase (DGC) activity in response to oxygen availability. Thus, catalyzes the synthesis of cyclic diguanylate (c-di-GMP) via the condensation of 2 GTP molecules. Cyclic-di-GMP is a second messenger which controls cell surface-associated traits in bacteria. In Shigella boydii serotype 4 (strain Sb227), this protein is Diguanylate cyclase DosC (dosC).